Here is a 318-residue protein sequence, read N- to C-terminus: NADH-ubiquinone oxidoreductase chain 1 (318 aa).

A run of 8 helical transmembrane segments spans residues 2–22, 70–90, 100–120, 147–167, 172–192, 222–242, 253–273, and 294–314; these read FMIN…FLTL, MFIL…IPLP, LGVL…LWSG, AIIL…TLII, TWLI…TLAE, LFFM…AILF, ELYT…FLWI, and LPLT…TSGI.

This sequence belongs to the complex I subunit 1 family. In terms of assembly, core subunit of respiratory chain NADH dehydrogenase (Complex I) which is composed of 45 different subunits.

The protein localises to the mitochondrion inner membrane. It carries out the reaction a ubiquinone + NADH + 5 H(+)(in) = a ubiquinol + NAD(+) + 4 H(+)(out). Its function is as follows. Core subunit of the mitochondrial membrane respiratory chain NADH dehydrogenase (Complex I) which catalyzes electron transfer from NADH through the respiratory chain, using ubiquinone as an electron acceptor. Essential for the catalytic activity and assembly of complex I. The polypeptide is NADH-ubiquinone oxidoreductase chain 1 (MT-ND1) (Bos mutus grunniens (Wild yak)).